Here is a 323-residue protein sequence, read N- to C-terminus: Cytochrome c biogenesis protein CcsA (323 aa).

Transmembrane regions (helical) follow at residues Ile9–Leu29, Leu37–Val57, Leu71–Phe91, Val100–Leu120, Met145–Ile165, Ile227–Asn247, Thr261–His275, and Ala288–Leu308.

This sequence belongs to the CcmF/CycK/Ccl1/NrfE/CcsA family. As to quaternary structure, may interact with Ccs1.

The protein localises to the plastid. The protein resides in the chloroplast thylakoid membrane. Its function is as follows. Required during biogenesis of c-type cytochromes (cytochrome c6 and cytochrome f) at the step of heme attachment. The chain is Cytochrome c biogenesis protein CcsA from Cucumis sativus (Cucumber).